A 345-amino-acid polypeptide reads, in one-letter code: Protein GAMETE CELL DEFECTIVE 1, mitochondrial (345 aa).

Residues 1-43 constitute a mitochondrion transit peptide; it reads MLALRKTLLHGRLPAAPPAAAAAAIASRIPALLRRLSSSPGDG. The interval 36–81 is disordered; sequence LSSSPGDGQGGDEWGSSWSTGITKEHFDGSDAAVGRPVTSPSKPVS.

In terms of tissue distribution, expressed in roots, stems, leaves and florets.

It is found in the mitochondrion. In terms of biological role, essential for fertility (male and female gametophyte functions and development). Required for the integrity of female gametic mitochondria. Involved in embryo apical-basal patterning, and particularly dorsal-ventral patterning, during early embryogenesis, and endosperm free nucleus positioning and development as well as early endosperm development, probably by modulating the expression pattern of related genes (e.g. AL1, MYB3/AL2, CYP78A13/GE, PNH1, HAZ1, MPK6 and OSH1). Has function in triggering of endosperm programmed cell death (PCD) leading to syncytial endosperm cellularization and starchy endosperm cell maturation. Implicated in central vacuole dynamics necessary for microspore development leading to pollen production, and for pollen development and germination. This is Protein GAMETE CELL DEFECTIVE 1, mitochondrial from Oryza sativa subsp. japonica (Rice).